The chain runs to 85 residues: Sodium channel neurotoxin MeuNaTxalpha-2 (85 aa).

The signal sequence occupies residues 1 to 19 (MNYLVMISLALLLMTGVES). One can recognise an LCN-type CS-alpha/beta domain in the interval 21–83 (RDAYIANDRN…VPIRIPGECR (63 aa)). Cystine bridges form between Cys31-Cys82, Cys35-Cys55, Cys41-Cys65, and Cys45-Cys67. Arg83 is subject to Arginine amide.

It belongs to the long (4 C-C) scorpion toxin superfamily. Sodium channel inhibitor family. Alpha subfamily. As to expression, expressed by the venom gland.

It localises to the secreted. Alpha toxins bind voltage-independently at site-3 of sodium channels (Nav) and inhibit the inactivation of the activated channels, thereby blocking neuronal transmission. This toxin inhibits inactivation of Nav1.4/SCN4A (EC(50)=2.23 uM) and drosophila DmNav1 (EC(50)=220 nM). The toxin (1 uM) does not significantly shift the midpoint of activation at the two channels, but induces a significant depolarizing shift in the V(1/2) of inactivation of the channels. In addition, the toxin accelerates the recovery from fast inactivation in Nav1.4/SCN4A and DmNav1. It also shows antimicrobial activity. This chain is Sodium channel neurotoxin MeuNaTxalpha-2, found in Mesobuthus eupeus (Lesser Asian scorpion).